Reading from the N-terminus, the 294-residue chain is Ribosomal RNA small subunit methyltransferase A (294 aa).

Asn29, Val31, Gly56, Glu77, Asp107, and Asn126 together coordinate S-adenosyl-L-methionine.

Belongs to the class I-like SAM-binding methyltransferase superfamily. rRNA adenine N(6)-methyltransferase family. RsmA subfamily.

It localises to the cytoplasm. The enzyme catalyses adenosine(1518)/adenosine(1519) in 16S rRNA + 4 S-adenosyl-L-methionine = N(6)-dimethyladenosine(1518)/N(6)-dimethyladenosine(1519) in 16S rRNA + 4 S-adenosyl-L-homocysteine + 4 H(+). Its function is as follows. Specifically dimethylates two adjacent adenosines (A1518 and A1519) in the loop of a conserved hairpin near the 3'-end of 16S rRNA in the 30S particle. May play a critical role in biogenesis of 30S subunits. The chain is Ribosomal RNA small subunit methyltransferase A from Mycobacterium sp. (strain JLS).